We begin with the raw amino-acid sequence, 112 residues long: Cytochrome c3 (112 aa).

Heme c-binding residues include His26, His29, Cys34, Cys37, His38, His39, Cys49, Cys54, His55, His73, Cys83, Cys86, His87, Cys104, Cys109, and His110.

Heme is required as a cofactor.

Its function is as follows. Participates in sulfate respiration coupled with phosphorylation by transferring electrons from the enzyme dehydrogenase to ferredoxin. In Megalodesulfovibrio gigas (strain ATCC 19364 / DSM 1382 / NCIMB 9332 / VKM B-1759) (Desulfovibrio gigas), this protein is Cytochrome c3.